We begin with the raw amino-acid sequence, 293 residues long: Acetylglutamate kinase (293 aa).

Residues 68–69 (GG), Arg-90, and Asn-189 each bind substrate.

This sequence belongs to the acetylglutamate kinase family. ArgB subfamily.

The protein localises to the cytoplasm. The enzyme catalyses N-acetyl-L-glutamate + ATP = N-acetyl-L-glutamyl 5-phosphate + ADP. Its pathway is amino-acid biosynthesis; L-arginine biosynthesis; N(2)-acetyl-L-ornithine from L-glutamate: step 2/4. Its function is as follows. Catalyzes the ATP-dependent phosphorylation of N-acetyl-L-glutamate. This Mycobacterium marinum (strain ATCC BAA-535 / M) protein is Acetylglutamate kinase.